The following is a 716-amino-acid chain: Fatty acid oxidation complex subunit alpha (716 aa).

The segment at 1 to 189 is enoyl-CoA hydratase/isomerase; it reads MIYQSPTIQV…KVGAVDAVVA (189 aa). Residue Asp-296 participates in substrate binding. Residues 311–716 form a 3-hydroxyacyl-CoA dehydrogenase region; that stretch reads KEVKNAAVLG…ATNNGSYYQA (406 aa). Residues Met-324, Asp-343, 400-402, Lys-407, and Ser-429 contribute to the NAD(+) site; that span reads VVE. His-450 serves as the catalytic For 3-hydroxyacyl-CoA dehydrogenase activity. Asn-453 is an NAD(+) binding site. Positions 500 and 660 each coordinate substrate.

In the N-terminal section; belongs to the enoyl-CoA hydratase/isomerase family. The protein in the C-terminal section; belongs to the 3-hydroxyacyl-CoA dehydrogenase family. In terms of assembly, heterotetramer of two alpha chains (FadB) and two beta chains (FadA).

The catalysed reaction is a (3S)-3-hydroxyacyl-CoA + NAD(+) = a 3-oxoacyl-CoA + NADH + H(+). The enzyme catalyses a (3S)-3-hydroxyacyl-CoA = a (2E)-enoyl-CoA + H2O. It catalyses the reaction a 4-saturated-(3S)-3-hydroxyacyl-CoA = a (3E)-enoyl-CoA + H2O. It carries out the reaction (3S)-3-hydroxybutanoyl-CoA = (3R)-3-hydroxybutanoyl-CoA. The catalysed reaction is a (3Z)-enoyl-CoA = a 4-saturated (2E)-enoyl-CoA. The enzyme catalyses a (3E)-enoyl-CoA = a 4-saturated (2E)-enoyl-CoA. It participates in lipid metabolism; fatty acid beta-oxidation. Involved in the aerobic and anaerobic degradation of long-chain fatty acids via beta-oxidation cycle. Catalyzes the formation of 3-oxoacyl-CoA from enoyl-CoA via L-3-hydroxyacyl-CoA. It can also use D-3-hydroxyacyl-CoA and cis-3-enoyl-CoA as substrate. The chain is Fatty acid oxidation complex subunit alpha from Shewanella putrefaciens (strain CN-32 / ATCC BAA-453).